The chain runs to 186 residues: Large ribosomal subunit protein bL12c (186 aa).

A compositionally biased stretch (polar residues) spans 1-11 (MASTLSTITLR). Residues 1–24 (MASTLSTITLRSPSPSTATSTHAS) are disordered. The N-terminal 53 residues, 1–53 (MASTLSTITLRSPSPSTATSTHASIPFPKKTLEFPIRTPKLQNRRATFLRPLA), are a transit peptide targeting the chloroplast. Low complexity predominate over residues 12 to 24 (SPSPSTATSTHAS).

This sequence belongs to the bacterial ribosomal protein bL12 family.

It localises to the plastid. Its subcellular location is the chloroplast. The protein is Large ribosomal subunit protein bL12c of Nicotiana sylvestris (Wood tobacco).